We begin with the raw amino-acid sequence, 105 residues long: uncharacterized protein (105 aa).

This is an uncharacterized protein from Fowlpox virus (strain NVSL) (FPV).